The primary structure comprises 180 residues: uncharacterized protein (180 aa).

Positions 1–93 are disordered; sequence MPSSVPKTSI…LPRRRNPGWV (93 aa). Low complexity-rich tracts occupy residues 9 to 25 and 47 to 64; these read SIES…SQAS and LTSS…SSSQ.

This is an uncharacterized protein from Homo sapiens (Human).